A 230-amino-acid chain; its full sequence is tRNA (guanine-N(7)-)-methyltransferase (230 aa).

Residues Glu-61, Glu-86, Asp-113, and Asp-135 each contribute to the S-adenosyl-L-methionine site. Asp-135 is an active-site residue. Residues Lys-139, Asp-171, and 209 to 212 (TRYE) contribute to the substrate site.

This sequence belongs to the class I-like SAM-binding methyltransferase superfamily. TrmB family.

It carries out the reaction guanosine(46) in tRNA + S-adenosyl-L-methionine = N(7)-methylguanosine(46) in tRNA + S-adenosyl-L-homocysteine. It participates in tRNA modification; N(7)-methylguanine-tRNA biosynthesis. Catalyzes the formation of N(7)-methylguanine at position 46 (m7G46) in tRNA. This chain is tRNA (guanine-N(7)-)-methyltransferase, found in Azorhizobium caulinodans (strain ATCC 43989 / DSM 5975 / JCM 20966 / LMG 6465 / NBRC 14845 / NCIMB 13405 / ORS 571).